We begin with the raw amino-acid sequence, 235 residues long: Pyridoxine 5'-phosphate synthase (235 aa).

Asparagine 7 lines the 3-amino-2-oxopropyl phosphate pocket. 9–10 (DH) is a binding site for 1-deoxy-D-xylulose 5-phosphate. Arginine 18 serves as a coordination point for 3-amino-2-oxopropyl phosphate. Histidine 43 serves as the catalytic Proton acceptor. Residues arginine 45 and histidine 50 each coordinate 1-deoxy-D-xylulose 5-phosphate. Residue glutamate 70 is the Proton acceptor of the active site. Threonine 100 provides a ligand contact to 1-deoxy-D-xylulose 5-phosphate. Catalysis depends on histidine 187, which acts as the Proton donor. Residues glycine 188 and 209–210 (GH) contribute to the 3-amino-2-oxopropyl phosphate site.

This sequence belongs to the PNP synthase family. Homooctamer; tetramer of dimers.

It is found in the cytoplasm. The catalysed reaction is 3-amino-2-oxopropyl phosphate + 1-deoxy-D-xylulose 5-phosphate = pyridoxine 5'-phosphate + phosphate + 2 H2O + H(+). It functions in the pathway cofactor biosynthesis; pyridoxine 5'-phosphate biosynthesis; pyridoxine 5'-phosphate from D-erythrose 4-phosphate: step 5/5. In terms of biological role, catalyzes the complicated ring closure reaction between the two acyclic compounds 1-deoxy-D-xylulose-5-phosphate (DXP) and 3-amino-2-oxopropyl phosphate (1-amino-acetone-3-phosphate or AAP) to form pyridoxine 5'-phosphate (PNP) and inorganic phosphate. The polypeptide is Pyridoxine 5'-phosphate synthase (Desulfatibacillum aliphaticivorans).